Consider the following 493-residue polypeptide: MRLIGLALGLLLGALAQAGEAPGEALYRQHCQACHGAGRLGGSGPTLLPESLSRLKPAQAREVILHGRPATQMAGFAGQLDDAAADALVAYLYQAPPREPQWSAEDIRASQVQPHPLATLPSRPRFEADPLNLFVVVESGDHHVTILDGDRFEPIARFPSRYALHGGPKFSPDGRLVYFASRDGWVTLYDLYNLKVVAEVRAGLNTRNLAVSDDGRWVLVGNYLPGNLVLLDARDLSLVQVIPAADAQGQASRVSAVYTAPPRHSFVVALKDVHELWELPYANGKPVAPKRLAVADYLDDFSFSPDYRYLLGSSRQARGGEVIELDSGARVASIPLSGMPHLGSGIYWKRDGRWVFATPNISRGVISVIDLQNWKPLKEIVTDGPGFFMRSHADSPYAWTDTFLGKKHDEILLIDKQTLEIAHRLRPSPGKVAGHVEFTRDGRYALLSVWDRDGALVVYDAHSLEEVKRLPMNKPSGKYNVGNKIGYAEGTSH.

The N-terminal stretch at 1-18 (MRLIGLALGLLLGALAQA) is a signal peptide. Positions 19 to 96 (GEAPGEALYR…ALVAYLYQAP (78 aa)) constitute a Cytochrome c domain. Heme c-binding residues include Cys31, Cys34, His35, Arg68, and Met73. A D1-heme domain region spans residues 114 to 468 (PHPLATLPSR…YDAHSLEEVK (355 aa)). Residues His165, Gly167, Lys169, Arg182, Arg207, Asn208, His341, Arg390, and His435 each contribute to the heme d1 site. Residue Arg182 participates in heme c binding.

The protein belongs to the cytochrome c family. In terms of assembly, monomer. Heme c is required as a cofactor.

It is found in the periplasm. The catalysed reaction is dihydro-heme d1 + A = heme d1 + AH2. The protein operates within porphyrin-containing compound metabolism. Its function is as follows. Involved in heme d1 biosynthesis. Catalyzes the introduction of a double bond into the propionate side chain of pyrrole ring D of dihydro-heme d1, therefore converting dihydro-heme d1 to heme d1. The polypeptide is Dihydro-heme d1 dehydrogenase (Pseudomonas aeruginosa (strain ATCC 15692 / DSM 22644 / CIP 104116 / JCM 14847 / LMG 12228 / 1C / PRS 101 / PAO1)).